Here is a 400-residue protein sequence, read N- to C-terminus: Deoxyhypusine synthase-like protein (400 aa).

The interval 372–400 (KLGKEQMPEPQSTEPVATYPCGTPIKGRK) is disordered.

The protein belongs to the deoxyhypusine synthase family.

This is Deoxyhypusine synthase-like protein from Cyanothece sp. (strain PCC 7425 / ATCC 29141).